Consider the following 283-residue polypeptide: Polyamine aminopropyltransferase (283 aa).

One can recognise a PABS domain in the interval 5 to 238 (PTWIDEYHKG…GIWSWTFASD (234 aa)). Gln-32 contacts S-methyl-5'-thioadenosine. The spermidine site is built by His-63 and Asp-87. S-methyl-5'-thioadenosine contacts are provided by residues Glu-107 and 139-140 (DG). The active-site Proton acceptor is Asp-158. 158–161 (DCSD) is a binding site for spermidine.

This sequence belongs to the spermidine/spermine synthase family. As to quaternary structure, homodimer or homotetramer.

Its subcellular location is the cytoplasm. It catalyses the reaction S-adenosyl 3-(methylsulfanyl)propylamine + putrescine = S-methyl-5'-thioadenosine + spermidine + H(+). It functions in the pathway amine and polyamine biosynthesis; spermidine biosynthesis; spermidine from putrescine: step 1/1. Functionally, catalyzes the irreversible transfer of a propylamine group from the amino donor S-adenosylmethioninamine (decarboxy-AdoMet) to putrescine (1,4-diaminobutane) to yield spermidine. In Prochlorococcus marinus subsp. pastoris (strain CCMP1986 / NIES-2087 / MED4), this protein is Polyamine aminopropyltransferase.